A 435-amino-acid chain; its full sequence is Mitochondrial association factor 1 form a1 (435 aa).

Positions 1-20 (MWRIWRCRLSFLFATGCLLG) are cleaved as a signal peptide. The Vacuolar portion of the chain corresponds to 21–95 (ALTAGLGSQM…SVTARRRRNR (75 aa)). Residues 43–88 (GVADASQEAGDVVEERTERTEEQVFAPGPPRRHSSESLFPRNASVT) are disordered. The segment covering 55 to 64 (VEERTERTEE) has biased composition (basic and acidic residues). A helical transmembrane segment spans residues 96-116 (RIAPIATAVGVAVILAALYVL). The Cytoplasmic portion of the chain corresponds to 117 to 435 (RRRRAQPPQE…ERKYKFPQGD (319 aa)). Residues 120-162 (RAQPPQEPEPPTRLRTPRPRAPSEQQQPSESEPPAEVPMTPDP) form a disordered region. Residues 141 to 153 (PSEQQQPSESEPP) show a composition bias toward low complexity.

In terms of assembly, interacts with host SAMM50.

It localises to the parasitophorous vacuole membrane. In terms of biological role, during host cell infection by tachyzoites, does not play a role in tethering the parasitophorous vacuole to the host mitochondria, probably because it does not bind host mitochondrial import protein TOMM70. This Toxoplasma gondii protein is Mitochondrial association factor 1 form a1.